The sequence spans 138 residues: Ribosome-binding factor A (138 aa).

The interval 119 to 138 (RSPEVQRDLGPSNEKDDEQN) is disordered.

The protein belongs to the RbfA family. Monomer. Binds 30S ribosomal subunits, but not 50S ribosomal subunits or 70S ribosomes.

The protein localises to the cytoplasm. Functionally, one of several proteins that assist in the late maturation steps of the functional core of the 30S ribosomal subunit. Associates with free 30S ribosomal subunits (but not with 30S subunits that are part of 70S ribosomes or polysomes). Required for efficient processing of 16S rRNA. May interact with the 5'-terminal helix region of 16S rRNA. The polypeptide is Ribosome-binding factor A (Agrobacterium fabrum (strain C58 / ATCC 33970) (Agrobacterium tumefaciens (strain C58))).